An 867-amino-acid chain; its full sequence is uncharacterized protein (867 aa).

The 294-residue stretch at M1–K294 folds into the SPX domain. 2 disordered regions span residues Q105 to S152 and E165 to R228. The span at I138 to S152 shows a compositional bias: polar residues. Over residues G198–N223 the composition is skewed to acidic residues. Helical transmembrane passes span T406–I426, C434–V454, V485–A505, M537–F557, I576–S596, F616–F636, F656–L676, V683–L703, F712–S732, V755–A775, L797–F817, and A842–M862.

It belongs to the CitM (TC 2.A.11) transporter family.

The protein resides in the endoplasmic reticulum membrane. This is an uncharacterized protein from Schizosaccharomyces pombe (strain 972 / ATCC 24843) (Fission yeast).